Reading from the N-terminus, the 143-residue chain is Large ribosomal subunit protein uL15 (143 aa).

Positions 1 to 51 (MELNTIKPASGAKHAKRRVGRGIGSGLGKTAGRGHKGQKSRAGGYHKVGFE) are disordered. Gly residues predominate over residues 21 to 31 (RGIGSGLGKTA).

It belongs to the universal ribosomal protein uL15 family. As to quaternary structure, part of the 50S ribosomal subunit.

In terms of biological role, binds to the 23S rRNA. The protein is Large ribosomal subunit protein uL15 of Methylibium petroleiphilum (strain ATCC BAA-1232 / LMG 22953 / PM1).